The sequence spans 396 residues: Elongation factor Tu (396 aa).

The region spanning 10–205 is the tr-type G domain; that stretch reads KPHVNIGTIG…ACDDNIPDPV (196 aa). Positions 19–26 are G1; sequence GHVDHGKT. GTP is bound at residue 19-26; sequence GHVDHGKT. T26 lines the Mg(2+) pocket. The interval 62–66 is G2; that stretch reads GITIN. The tract at residues 83 to 86 is G3; sequence DAPG. GTP is bound by residues 83–87 and 138–141; these read DAPGH and NKCD. The tract at residues 138–141 is G4; that stretch reads NKCD. Residues 175 to 177 are G5; sequence SAL.

Belongs to the TRAFAC class translation factor GTPase superfamily. Classic translation factor GTPase family. EF-Tu/EF-1A subfamily. In terms of assembly, monomer.

It localises to the cytoplasm. The enzyme catalyses GTP + H2O = GDP + phosphate + H(+). In terms of biological role, GTP hydrolase that promotes the GTP-dependent binding of aminoacyl-tRNA to the A-site of ribosomes during protein biosynthesis. The sequence is that of Elongation factor Tu from Corynebacterium efficiens (strain DSM 44549 / YS-314 / AJ 12310 / JCM 11189 / NBRC 100395).